Reading from the N-terminus, the 220-residue chain is Fructose-6-phosphate aldolase (220 aa).

Lys-85 functions as the Schiff-base intermediate with substrate in the catalytic mechanism.

It belongs to the transaldolase family. Type 3A subfamily. In terms of assembly, homodecamer.

The protein resides in the cytoplasm. It catalyses the reaction beta-D-fructose 6-phosphate = dihydroxyacetone + D-glyceraldehyde 3-phosphate. Catalyzes the reversible formation of fructose 6-phosphate from dihydroxyacetone and D-glyceraldehyde 3-phosphate via an aldolization reaction. This chain is Fructose-6-phosphate aldolase, found in Salmonella schwarzengrund (strain CVM19633).